The primary structure comprises 187 residues: Ribosome maturation factor RimM (187 aa).

One can recognise a PRC barrel domain in the interval 94 to 168 (DDEFYHADLV…RVIVDMPDGL (75 aa)). Residues 167-187 (GLIGGDKPDTSDTAPLGQDFD) are disordered.

This sequence belongs to the RimM family. Binds ribosomal protein uS19.

Its subcellular location is the cytoplasm. An accessory protein needed during the final step in the assembly of 30S ribosomal subunit, possibly for assembly of the head region. Essential for efficient processing of 16S rRNA. May be needed both before and after RbfA during the maturation of 16S rRNA. It has affinity for free ribosomal 30S subunits but not for 70S ribosomes. This is Ribosome maturation factor RimM from Jannaschia sp. (strain CCS1).